The sequence spans 368 residues: Probable leucine aminopeptidase ARB_03492 (368 aa).

The signal sequence occupies residues 1 to 18; that stretch reads MKVSAIAAVAALAAVAVA. Asn92 carries N-linked (GlcNAc...) asparagine glycosylation. 2 residues coordinate Zn(2+): His172 and Asp191. Residues Asn192 and Asn216 are each glycosylated (N-linked (GlcNAc...) asparagine). Zn(2+) contacts are provided by Glu230 and Asp257. Cysteines 301 and 305 form a disulfide. His334 contributes to the Zn(2+) binding site.

Belongs to the peptidase M28 family. M28E subfamily. As to quaternary structure, monomer. Zn(2+) serves as cofactor.

Its subcellular location is the secreted. Its function is as follows. Probable extracellular aminopeptidase which contributes to pathogenicity. The protein is Probable leucine aminopeptidase ARB_03492 of Arthroderma benhamiae (strain ATCC MYA-4681 / CBS 112371) (Trichophyton mentagrophytes).